The following is a 472-amino-acid chain: Threonine synthase-like 2 (472 aa).

Residue Lys-113 is modified to N6-(pyridoxal phosphate)lysine.

Belongs to the threonine synthase family. The cofactor is pyridoxal 5'-phosphate.

Functionally, acts as a catabolic phospho-lyase on both gamma- and beta-phosphorylated substrates. Degrades O-phospho-threonine (PThr) to alpha-ketobutyrate, ammonia and phosphate. The sequence is that of Threonine synthase-like 2 (thnsl2) from Xenopus laevis (African clawed frog).